The chain runs to 295 residues: Glucose-1-phosphate thymidylyltransferase (295 aa).

Residues D111 and D226 each contribute to the Mg(2+) site.

The protein belongs to the glucose-1-phosphate thymidylyltransferase family. In terms of assembly, homotetramer. Mg(2+) is required as a cofactor.

The catalysed reaction is dTTP + alpha-D-glucose 1-phosphate + H(+) = dTDP-alpha-D-glucose + diphosphate. It functions in the pathway carbohydrate biosynthesis; dTDP-L-rhamnose biosynthesis. It participates in bacterial outer membrane biogenesis; LPS O-antigen biosynthesis. In terms of biological role, catalyzes the formation of dTDP-glucose, from dTTP and glucose 1-phosphate, as well as its pyrophosphorolysis. In Xanthomonas campestris pv. campestris (strain B100), this protein is Glucose-1-phosphate thymidylyltransferase (rmlA).